The chain runs to 84 residues: MAQAQSPLQWLATKLIRGYQIFISPILGPKCRFHPTCSNYALEAIRLHGFVKGSWFAGKRVLKCHPLHPGGEDPVPPKNNRCNK.

This sequence belongs to the UPF0161 family.

It is found in the cell inner membrane. Could be involved in insertion of integral membrane proteins into the membrane. The sequence is that of Putative membrane protein insertion efficiency factor from Shewanella loihica (strain ATCC BAA-1088 / PV-4).